The chain runs to 232 residues: Large ribosomal subunit protein uL1 (232 aa).

It belongs to the universal ribosomal protein uL1 family. In terms of assembly, part of the 50S ribosomal subunit.

Its function is as follows. Binds directly to 23S rRNA. The L1 stalk is quite mobile in the ribosome, and is involved in E site tRNA release. Protein L1 is also a translational repressor protein, it controls the translation of the L11 operon by binding to its mRNA. The sequence is that of Large ribosomal subunit protein uL1 from Xylella fastidiosa (strain M12).